A 161-amino-acid polypeptide reads, in one-letter code: Nucleotide-binding protein Tcr_1902 (161 aa).

It belongs to the YajQ family.

Nucleotide-binding protein. This Hydrogenovibrio crunogenus (strain DSM 25203 / XCL-2) (Thiomicrospira crunogena) protein is Nucleotide-binding protein Tcr_1902.